The chain runs to 346 residues: Beta-ketoacyl-[acyl-carrier-protein] synthase III (346 aa).

Catalysis depends on residues Cys120 and His256. An ACP-binding region spans residues 257–261 (QANIR). The active site involves Asn286.

The protein belongs to the thiolase-like superfamily. FabH family. In terms of assembly, homodimer.

It is found in the cytoplasm. It catalyses the reaction malonyl-[ACP] + acetyl-CoA + H(+) = 3-oxobutanoyl-[ACP] + CO2 + CoA. Its pathway is lipid metabolism; fatty acid biosynthesis. Its function is as follows. Catalyzes the condensation reaction of fatty acid synthesis by the addition to an acyl acceptor of two carbons from malonyl-ACP. Catalyzes the first condensation reaction which initiates fatty acid synthesis and may therefore play a role in governing the total rate of fatty acid production. Possesses both acetoacetyl-ACP synthase and acetyl transacylase activities. Its substrate specificity determines the biosynthesis of branched-chain and/or straight-chain of fatty acids. The sequence is that of Beta-ketoacyl-[acyl-carrier-protein] synthase III from Deinococcus geothermalis (strain DSM 11300 / CIP 105573 / AG-3a).